We begin with the raw amino-acid sequence, 119 residues long: Centrocin 1 (119 aa).

Positions 1-20 (MMIKIAVVLCAVMATTMVRA) are cleaved as a signal peptide. Residues 21 to 50 (KYVEEQELADLLDLLISEEVSSPDDAVALQ) constitute a propeptide that is removed on maturation. Residues Trp-52 and Trp-53 each carry the 6'-bromotryptophan modification. Cys-75 and Cys-110 form a disulfide bridge. The propeptide occupies 81–104 (SPQEARAKVLEAFPEMKEADLDEE). Asn-117 carries the asparagine amide modification.

In terms of assembly, heterodimer of a light and a heavy chain, probably disulfide-linked.

Functionally, has antimicrobial activity against Gram-negative bacteria, Gram-positive bacteria and against fungi with minimum inhibitory concentration (MIC) between 0.78 uM and 50 uM. Shows little hemolytic activity even at a concentration of 100 uM. In terms of biological role, has no antimicrobial activity. Shows no hemolytic activity. The sequence is that of Centrocin 1 from Echinus esculentus (Sea urchin).